Reading from the N-terminus, the 199-residue chain is Nucleoside triphosphate pyrophosphatase (199 aa).

The active-site Proton acceptor is aspartate 72.

The protein belongs to the Maf family. A divalent metal cation is required as a cofactor.

The protein localises to the cytoplasm. It catalyses the reaction a ribonucleoside 5'-triphosphate + H2O = a ribonucleoside 5'-phosphate + diphosphate + H(+). The catalysed reaction is a 2'-deoxyribonucleoside 5'-triphosphate + H2O = a 2'-deoxyribonucleoside 5'-phosphate + diphosphate + H(+). Functionally, nucleoside triphosphate pyrophosphatase. May have a dual role in cell division arrest and in preventing the incorporation of modified nucleotides into cellular nucleic acids. In Synechococcus elongatus (strain ATCC 33912 / PCC 7942 / FACHB-805) (Anacystis nidulans R2), this protein is Nucleoside triphosphate pyrophosphatase.